The chain runs to 199 residues: Shikimate kinase (199 aa).

ATP is bound at residue 14–19 (GSGKST). Ser18 serves as a coordination point for Mg(2+). Substrate-binding residues include Asp36, Arg60, and Gly82. Arg120 lines the ATP pocket. Arg147 provides a ligand contact to substrate. The segment at 179–199 (YVRRAEKNQNSHSQTKKQSRK) is disordered.

It belongs to the shikimate kinase family. As to quaternary structure, monomer. The cofactor is Mg(2+).

Its subcellular location is the cytoplasm. The enzyme catalyses shikimate + ATP = 3-phosphoshikimate + ADP + H(+). The protein operates within metabolic intermediate biosynthesis; chorismate biosynthesis; chorismate from D-erythrose 4-phosphate and phosphoenolpyruvate: step 5/7. Catalyzes the specific phosphorylation of the 3-hydroxyl group of shikimic acid using ATP as a cosubstrate. The polypeptide is Shikimate kinase (Chlorobium phaeobacteroides (strain BS1)).